Reading from the N-terminus, the 436-residue chain is GTPase Der (436 aa).

EngA-type G domains follow at residues 4 to 167 and 176 to 351; these read PVVA…KNIP and VQFC…ENHS. Residues 10–17, 57–61, 119–122, 182–189, 229–233, and 294–297 each bind GTP; these read GRPNVGKS, DTGGI, NKVD, DTAGM, and NKWD. The KH-like domain occupies 352–436; the sequence is MRVQTNILND…PIRIFARARK (85 aa).

This sequence belongs to the TRAFAC class TrmE-Era-EngA-EngB-Septin-like GTPase superfamily. EngA (Der) GTPase family. As to quaternary structure, associates with the 50S ribosomal subunit.

Its function is as follows. GTPase that plays an essential role in the late steps of ribosome biogenesis. This chain is GTPase Der, found in Bacillus licheniformis (strain ATCC 14580 / DSM 13 / JCM 2505 / CCUG 7422 / NBRC 12200 / NCIMB 9375 / NCTC 10341 / NRRL NRS-1264 / Gibson 46).